The chain runs to 131 residues: Global transcriptional regulator Spx 2 (131 aa).

A disulfide bridge links cysteine 10 with cysteine 13.

This sequence belongs to the ArsC family. Spx subfamily. In terms of assembly, interacts with the C-terminal domain of the alpha subunit of the RNAP.

The protein localises to the cytoplasm. Functionally, global transcriptional regulator that plays a key role in stress response and exerts either positive or negative regulation of genes. Acts by interacting with the C-terminal domain of the alpha subunit of the RNA polymerase (RNAP). This interaction can enhance binding of RNAP to the promoter region of target genes and stimulate their transcription, or block interaction of RNAP with activator. This is Global transcriptional regulator Spx 2 from Bacillus anthracis.